Reading from the N-terminus, the 171-residue chain is Ribosome maturation factor RimM (171 aa).

A PRC barrel domain is found at Asn-94–Gly-168.

This sequence belongs to the RimM family. Binds ribosomal protein uS19.

It localises to the cytoplasm. Its function is as follows. An accessory protein needed during the final step in the assembly of 30S ribosomal subunit, possibly for assembly of the head region. Essential for efficient processing of 16S rRNA. May be needed both before and after RbfA during the maturation of 16S rRNA. It has affinity for free ribosomal 30S subunits but not for 70S ribosomes. This is Ribosome maturation factor RimM from Anaplasma phagocytophilum (strain HZ).